Consider the following 83-residue polypeptide: Polcalcin Bra r 2 (83 aa).

EF-hand domains follow at residues 5–40 (TEKA…LGSV) and 43–75 (DDIK…NRGL). 10 residues coordinate Ca(2+): Asp18, Asn20, Asp22, Lys24, Glu29, Asp53, Asp55, Asp57, Tyr59, and Glu64.

The polypeptide is Polcalcin Bra r 2 (Brassica campestris (Field mustard)).